A 211-amino-acid chain; its full sequence is ATP-dependent dethiobiotin synthetase BioD (211 aa).

13-18 (GVGKTV) contributes to the ATP binding site. Thr-17 is a Mg(2+) binding site. Lys-33 is an active-site residue. Residues Cys-47 and Glu-101 each contribute to the Mg(2+) site. ATP contacts are provided by residues 101-104 (EGAG), 185-187 (PWL), and Asn-192.

The protein belongs to the dethiobiotin synthetase family. Homodimer. Mg(2+) is required as a cofactor.

Its subcellular location is the cytoplasm. The catalysed reaction is (7R,8S)-7,8-diammoniononanoate + CO2 + ATP = (4R,5S)-dethiobiotin + ADP + phosphate + 3 H(+). It functions in the pathway cofactor biosynthesis; biotin biosynthesis; biotin from 7,8-diaminononanoate: step 1/2. Functionally, catalyzes a mechanistically unusual reaction, the ATP-dependent insertion of CO2 between the N7 and N8 nitrogen atoms of 7,8-diaminopelargonic acid (DAPA, also called 7,8-diammoniononanoate) to form a ureido ring. In Bradyrhizobium diazoefficiens (strain JCM 10833 / BCRC 13528 / IAM 13628 / NBRC 14792 / USDA 110), this protein is ATP-dependent dethiobiotin synthetase BioD.